The sequence spans 175 residues: MVKYSQEPDNQTKSCKARGSDLRVHFKNTRETAHAIRKLPLIKAKRYLEDVIAHKQAIPFTRFCRGVGRTAQAKNRHSNGQGRWPAKSAQFVLDLLKNAESNAEVKGLDVDALFISHIQVNQAAKQRRRTYRAHGRINPYMSNPCHIELILSEKEEPVKKEPETQLAAKSKKSAA.

A compositionally biased stretch (basic and acidic residues) spans 153 to 163; sequence EKEEPVKKEPE. A disordered region spans residues 153–175; that stretch reads EKEEPVKKEPETQLAAKSKKSAA.

Belongs to the universal ribosomal protein uL22 family.

This Arabidopsis thaliana (Mouse-ear cress) protein is Large ribosomal subunit protein uL22y (RPL17B).